Consider the following 2079-residue polypeptide: Protein xmas (2079 aa).

An RRM domain is found at 12 to 83; it reads KTLLCRNIPE…HLFDISYADN (72 aa). The disordered stretch occupies residues 112–152; that stretch reads NEYGSGKPIKKPQNGSSGSGGSSMLPAIPVGPATAPVSRDR. The PCI domain occupies 342–525; it reads DSKINAENLT…ETEYKLPRQY (184 aa). The tract at residues 835 to 1359 is sufficient for Orc3 binding; sequence PLSFGAENPE…RRDASDHKHA (525 aa). 4 disordered regions span residues 1335-1360, 1755-1778, 1930-1963, and 2032-2079; these read RHTL…KHAM, AEET…SKRA, KAQA…TSKA, and SAAA…TGKL. Positions 1764 to 1776 are enriched in basic residues; it reads HHRHHGGGQKMSK. Residues 2048–2059 show a composition bias toward low complexity; that stretch reads PVVSPKVQVPSV. Over residues 2070–2079 the composition is skewed to polar residues; it reads GPQTTKTGKL.

It belongs to the SAC3 family. As to quaternary structure, component of the nuclear pore complex (NPC)-associated TREX-2/AMEX complex (anchoring and mRNA export complex), composed of e(y)2, xmas and PCID2. Within the TREX-2/ AMEX complex, interactions with e(y)2 is required for localization of e(y)2 to the nuclear periphery. Interaction between the TREX-2/AMEX complex and the ORC complex is required for ORC localization to mRNPs, and consequently mRNA export. Within the TREX-2/AMEX-ORC complex, interacts with Orc6, (via C-terminus) with Orc3, and weakly interacts with Orc4. However, another report found that the interaction with Orc3 is not direct, instead it is mediated via e(y)2. Interacts with piwi. Expressed in ovaries (at protein level). As to expression, detected in the testes and ovaries, with expression levels higher in oocytes than in testicular cells (at protein level). In terms of tissue distribution, detected in the testes and ovaries (at protein level). Detected in the testes.

It localises to the nucleus. The protein localises to the nucleoplasm. It is found in the nucleus membrane. Its subcellular location is the cytoplasm. In terms of biological role, involved in mRNA export and mRNA coupled transcription activation. Component of the nuclear pore complex (NPC)-associated TREX-2/AMEX complex (anchoring and mRNA export complex) which functions in docking export-competent ribonucleoprotein particles (mRNPs) to the nuclear entrance of the nuclear pore complex (nuclear basket), thereby enabling the export of mRNAs to the cytoplasm through the nuclear pores. The TREX-2/AMEX complex also functions with the transcriptional coactivator SAGA/TFTC complex, to anchor a subset of transcription sites to the nuclear pore complex basket in order to achieve efficient transcription and export of their resulting mRNAs. Within the complex, required for localization of e(y)2 to the nuclear periphery. This Drosophila melanogaster (Fruit fly) protein is Protein xmas.